A 464-amino-acid chain; its full sequence is GDNF family receptor alpha-2 (464 aa).

Residues 1-21 (MILANVFCLFFFLDETLRSLA) form the signal peptide. 14 cysteine pairs are disulfide-bonded: Cys-40/Cys-93, Cys-47/Cys-53, Cys-63/Cys-78, Cys-95/Cys-105, Cys-161/Cys-222, Cys-168/Cys-174, Cys-185/Cys-200, Cys-195/Cys-241, Cys-224/Cys-229, Cys-251/Cys-323, Cys-258/Cys-264, Cys-275/Cys-293, Cys-285/Cys-347, and Cys-325/Cys-335. An N-linked (GlcNAc...) asparagine glycan is attached at Asn-52. Residues Asn-357 and Asn-413 are each glycosylated (N-linked (GlcNAc...) asparagine). Ser-444 carries GPI-anchor amidated serine lipidation. The propeptide at 445–464 (RARPSAALTVLSVLMLKLAL) is removed in mature form.

The protein belongs to the GDNFR family. As to quaternary structure, interacts with NRTN ligand and RET: forms a 2:2:2 ternary complex composed of NRTN ligand, GFRA2 and RET receptor. Also forms a 4:4:4 tetrameric complex composed of 4 copies of NRTN ligand, GFRA2 and RET receptor, which prevents endocytosis of RET. Interacts with SORL1.

The protein localises to the cell membrane. Receptor for neurturin (NRTN), a growth factor that supports the survival of sympathetic neurons. NRTN-binding leads to autophosphorylation and activation of the RET receptor. Also able to mediate GDNF signaling through the RET tyrosine kinase receptor. The chain is GDNF family receptor alpha-2 (GFRA2) from Pongo abelii (Sumatran orangutan).